Reading from the N-terminus, the 130-residue chain is Ribonuclease P protein component (130 aa).

The protein belongs to the RnpA family. As to quaternary structure, consists of a catalytic RNA component (M1 or rnpB) and a protein subunit.

It catalyses the reaction Endonucleolytic cleavage of RNA, removing 5'-extranucleotides from tRNA precursor.. Its function is as follows. RNaseP catalyzes the removal of the 5'-leader sequence from pre-tRNA to produce the mature 5'-terminus. It can also cleave other RNA substrates such as 4.5S RNA. The protein component plays an auxiliary but essential role in vivo by binding to the 5'-leader sequence and broadening the substrate specificity of the ribozyme. The sequence is that of Ribonuclease P protein component from Azotobacter vinelandii (strain DJ / ATCC BAA-1303).